The sequence spans 374 residues: All-trans-retinol dehydrogenase [NAD(+)] ADH7 (374 aa).

Positions 47, 68, 98, 101, 104, 112, and 174 each coordinate Zn(2+). NAD(+) is bound by residues 199–204 (GLGGVG), Asp223, Lys228, 292–294 (VGA), and Arg369.

The protein belongs to the zinc-containing alcohol dehydrogenase family. Class-IV subfamily. In terms of assembly, homodimer. The cofactor is Zn(2+). High expression in the stomach mucosa. Lower expression in eye, thymus, skin and ovary. Very low expression in small intestine, liver and uterus.

The protein localises to the cytoplasm. It carries out the reaction a primary alcohol + NAD(+) = an aldehyde + NADH + H(+). The catalysed reaction is 10-hydroxydecanoate + NAD(+) = 10-oxodecanoate + NADH + H(+). The enzyme catalyses all-trans-retinol + NAD(+) = all-trans-retinal + NADH + H(+). It catalyses the reaction 9-cis-retinol + NAD(+) = 9-cis-retinal + NADH + H(+). It carries out the reaction all-trans-3,4-didehydroretinol + NAD(+) = all-trans-3,4-didehydroretinal + NADH + H(+). The catalysed reaction is all-trans-4-hydroxyretinol + NAD(+) = all-trans-4-hydroxyretinal + NADH + H(+). The enzyme catalyses all-trans-4-oxoretinol + NAD(+) = all-trans-4-oxoretinal + NADH + H(+). It catalyses the reaction 12-hydroxydodecanoate + NAD(+) = 12-oxododecanoate + NADH + H(+). It carries out the reaction 16-hydroxyhexadecanoate + NAD(+) = 16-oxohexadecanoate + NADH + H(+). The catalysed reaction is hexan-1-ol + NAD(+) = hexanal + NADH + H(+). The enzyme catalyses (E)-hex-2-en-1-ol + NAD(+) = (E)-hex-2-enal + NADH + H(+). It catalyses the reaction (E)-4-hydroxynon-2-en-1-ol + NAD(+) = (E)-4-hydroxynon-2-enal + NADH + H(+). Its activity is regulated as follows. Retinol oxidation is inhibited by the detergent Tween 80. Ethanol inhibits both all-trans-retinol and 9-cis-retinol oxidation. 13-cis-retinol is an effective competitive inhibitor of the 9-cis-retinol oxidation. All-trans-retinoic acid is a powerful inhibitor of all-trans-retinol oxidation. 13-cis-retinoic acid is a powerful inhibitor of all-trans-retinol oxidation. Cimetidine competitively inhibited ethanol oxidation. Its function is as follows. Catalyzes the NAD-dependent oxidation of all-trans-retinol, alcohol, aldehyde and omega-hydroxy fatty acids and their derivatives. Oxidizes preferentially all trans-retinol, all-trans-4-hydroxyretinol, 9-cis-retinol, 2-hexenol, and long chain omega-hydroxy fatty acids such as juniperic acid. In vitro can also catalyze the NADH-dependent reduction of all-trans-retinal and aldehydes and their derivatives. Reduces preferentially all trans-retinal, all-trans-4-oxoretinal and hexanal. Catalyzes in the oxidative direction with higher efficiency. Therefore may participate in retinoid metabolism, fatty acid omega-oxidation, and elimination of cytotoxic aldehydes produced by lipid peroxidation. The sequence is that of All-trans-retinol dehydrogenase [NAD(+)] ADH7 (Adh7) from Mus musculus (Mouse).